The sequence spans 414 residues: Putative competence-damage inducible protein (414 aa).

It belongs to the CinA family.

The polypeptide is Putative competence-damage inducible protein (Listeria monocytogenes serotype 4a (strain HCC23)).